Consider the following 2344-residue polypeptide: Mucin-4 (2344 aa).

Positions 1–30 (MRGPHGVSWRVPWLCLSCLCSCLLLLPVNT) are cleaved as a signal peptide. Residues 32 to 46 (TTSAPKTSTALPSST) are compositionally biased toward low complexity. 5 disordered regions span residues 32 to 760 (TTSA…QGSI), 773 to 1036 (QKMS…TTST), 1072 to 1130 (VPSL…TPSV), 1171 to 1197 (STVA…MGAS), and 1233 to 1269 (SGLT…TVPP). The segment covering 47 to 100 (NPSQMTSQVSNPTASSYRMTKNTGQASPMVTSSSITTLPQSQHTGSMKTTRNPQ) has biased composition (polar residues). The segment at 81–1006 (ITTLPQSQHT…VSTLVTSTQE (926 aa)) is variable number of tandem repeats (VNTR). Low complexity-rich tracts occupy residues 101 to 116 (TTGT…ASSS) and 123 to 137 (TTSQ…TTTS). O-linked (GalNAc...) threonine glycosylation is present at Thr133. Residues 142–225 (ESSSPPSTSV…GGMKTTRNPQ (84 aa)) are compositionally biased toward polar residues. The segment covering 226-273 (TTGTTEVTTTLSASSSDHPTSSPESTPGNTAPRTTETSTTTTTKVLMT) has biased composition (low complexity). Residues 274–305 (SLQQKLPTGSTLGTSTQELTTLPQSQHTGIMK) show a composition bias toward polar residues. Composition is skewed to low complexity over residues 306–322 (TTSR…TTRT) and 335–349 (TSSQ…TTTS). A compositionally biased stretch (polar residues) spans 373 to 436 (SGDTGHTMAV…GMKTTRNPQR (64 aa)). O-linked (GalNAc...) threonine glycosylation is found at Thr391 and Thr392. Positions 437–446 (TTPTEVTTST) are enriched in low complexity. Residues 447–468 (LSASSSDQVQVETTSRATLSPD) show a composition bias toward polar residues. Residues 469-492 (TTTTSHAPSVSSSSPSPPSTEGTS) are compositionally biased toward low complexity. O-linked (GalNAc...) threonine glycosylation occurs at Thr470. O-linked (GalNAc...) serine glycosylation is present at Ser479. Positions 493–509 (VDTGLTTAVTTQDSTPA) are enriched in polar residues. Over residues 510 to 546 (TTQGSLTSSSQTLSTVSPLSTSTQETSTQELTSSQSQ) the composition is skewed to low complexity. A compositionally biased stretch (polar residues) spans 547–580 (HTGSMKTTHNPQTTRNTEVTTTLSASSSDQVQVE). A compositionally biased stretch (low complexity) spans 581–594 (TTSQTTLSDATTTS). The segment covering 599–682 (ESSSPPSTSD…GGMKTTRNPQ (84 aa)) has biased composition (polar residues). 2 stretches are compositionally biased toward low complexity: residues 683-698 (TTGT…ASSS) and 705-719 (TSSQ…TTTS). Composition is skewed to polar residues over residues 724–760 (ESSS…QGSI) and 773–807 (QKMS…SSRP). The span at 808 to 828 (QTTSVTSTLSSSPSGSTPVQT) shows a compositional bias: low complexity. Polar residues predominate over residues 829–868 (RSVTSSSDERTNPTSSGVSNTSPATTEVLTPTSSPESTPG). Positions 869 to 915 (NTAPRTTETSTTTTTKVLMTSLQQKLPTGSTLGTSTPTEVTTTLSAS) are enriched in low complexity. Residues 916–994 (SSDQVQVETT…ISVTPSTQKM (79 aa)) show a composition bias toward polar residues. A compositionally biased stretch (low complexity) spans 995–1015 (STVSTLVTSTQELTSSQSQRT). Residues 1016 to 1026 (GSMGTSSKPQA) show a composition bias toward polar residues. Low complexity predominate over residues 1027 to 1036 (TTPTEVTTST). A compositionally biased stretch (polar residues) spans 1072–1083 (VPSLMHSSKPQA). Residues 1084–1096 (TTPTEVTTSTLSS) show a composition bias toward low complexity. The segment covering 1097–1116 (FSRGSTQTQTVSWETSSSGK) has biased composition (polar residues). Composition is skewed to low complexity over residues 1118–1130 (TAPS…TPSV), 1175–1188 (HRQS…HSQS), and 1233–1267 (SGLT…RSTV). Residues 1332–1492 (GHSGVMLISL…TGYTGRCGPT (161 aa)) enclose the NIDO domain. Positions 1574–1597 (GRHRTGLAAGTTSPLSASSTSSGG) are disordered. Residues 1580–1597 (LAAGTTSPLSASSTSSGG) are compositionally biased toward low complexity. The VWFD domain occupies 1609–1804 (RPAWTFGDPH…HYGMTSETNG (196 aa)). 19 N-linked (GlcNAc...) asparagine glycosylation sites follow: Asn1644, Asn1660, Asn1672, Asn1689, Asn1698, Asn1704, Asn1715, Asn1724, Asn1759, Asn1780, Asn1787, Asn1829, Asn1874, Asn1926, Asn1951, Asn1974, Asn1981, Asn2029, and Asn2048. An EGF-like 1 domain is found at 2047-2086 (QNHSCPVNYCYNHGHCDISGPPDCQPTCTCAPAFTGNRCF). 3 disulfide bridges follow: Cys2051–Cys2062, Cys2056–Cys2074, and Cys2076–Cys2085. 2 N-linked (GlcNAc...) asparagine glycosylation sites follow: Asn2114 and Asn2121. A helical transmembrane segment spans residues 2173-2193 (GPLIHYLNNQLISAVMEAFLL). A glycan (N-linked (GlcNAc...) asparagine) is linked at Asn2227. The EGF-like 2 domain maps to 2256 to 2295 (VSPCSEGYCHNGGQCKHLPDGPQCTCATFSIYTSWGERCE). Cystine bridges form between Cys2259–Cys2270, Cys2264–Cys2279, and Cys2281–Cys2294. The chain crosses the membrane as a helical span at residues 2301–2321 (LGAFFGILFGALGALLLLAIL).

As to quaternary structure, a heterodimeric complex, composed of a mucin-4 alpha chain and a cysteine-rich transmembrane mucin-4 beta chain. Mucin-4 beta chain interacts with ERBB2 via the EGF-like domain 1. In nonpolarized cells, associates with ERBB2 and ERBB3. In terms of processing, proteolytically cleaved into 2 subunits, mucin-4 alpha chain and mucin-4 beta chain. Post-translationally, mucin-4 alpha subunit is highly O-glycosylated. Mucin-4 beta subunit is predominantly N-glycosylated. As to expression, expression is developmentally regulated in the mammary gland, dramatically increases in the lactating gland compared with the virgin mammary gland, while decreasing again during mammary gland involution. Expressed in 13762 ascites cells. Overexpressed in some aggressive mammary tumors. Overexpression seems to block cell-cell and cell-matrix interactions to protect tumor cells from immune surveillance, and to promote metastasis.

The protein localises to the cell membrane. It localises to the secreted. Membrane-bound mucin, a family of highly glycosylated proteins that constitute the major component of the mucus, the slimy and viscous secretion covering epithelial surfaces. These glycoproteins play important roles in the protection of the epithelium and are implicated in epithelial renewal and differentiation. Regulates cellular behavior through both anti-adhesive effects on cell-cell and cell-extracellular matrix interactions and its ability to act as an intramembrane ligand for ERBB2. Plays an important role in proliferation and differentiation of epithelial cells by inducing specific phosphorylation of ERBB2. In polarized epithelial cells, segregates ERBB2 and other ERBB receptors and prevents ERBB2 from acting as a coreceptor. The interaction with ERBB2 leads to enhanced expression of CDKN1B. The formation of a MUC4-ERBB2-ERBB3-NRG1 complex leads to down-regulation of CDKN1B, resulting in repression of apoptosis and stimulation of proliferation. Its ability to promote tumor growth may be mainly due to repression of apoptosis as opposed to proliferation. The sequence is that of Mucin-4 (Muc4) from Rattus norvegicus (Rat).